The following is a 494-amino-acid chain: Glucose-6-phosphate 1-dehydrogenase (494 aa).

R46 and K150 together coordinate NADP(+). Residues H180, K184, E218, and D237 each contribute to the substrate site. The Proton acceptor role is filled by H242. A substrate-binding site is contributed by K342.

The protein belongs to the glucose-6-phosphate dehydrogenase family.

It catalyses the reaction D-glucose 6-phosphate + NADP(+) = 6-phospho-D-glucono-1,5-lactone + NADPH + H(+). The protein operates within carbohydrate degradation; pentose phosphate pathway; D-ribulose 5-phosphate from D-glucose 6-phosphate (oxidative stage): step 1/3. In terms of biological role, catalyzes the oxidation of glucose 6-phosphate to 6-phosphogluconolactone. The sequence is that of Glucose-6-phosphate 1-dehydrogenase from Aggregatibacter actinomycetemcomitans (Actinobacillus actinomycetemcomitans).